Reading from the N-terminus, the 455-residue chain is L-serine dehydratase (455 aa).

The protein belongs to the iron-sulfur dependent L-serine dehydratase family. The cofactor is [4Fe-4S] cluster.

It carries out the reaction L-serine = pyruvate + NH4(+). It participates in carbohydrate biosynthesis; gluconeogenesis. The sequence is that of L-serine dehydratase (sdaA) from Streptomyces coelicolor (strain ATCC BAA-471 / A3(2) / M145).